The sequence spans 501 residues: Probable sucrose utilization protein SUC1 (501 aa).

Positions 13 to 39 form a DNA-binding region, zn(2)-C6 fungal-type; it reads CDSCSFRKVKCDMKTPCSRCVLNNLKC.

The protein belongs to the MAL13 family.

Its subcellular location is the nucleus. In terms of biological role, affects sucrose utilization and alpha-glucosidase activity. Probable transcriptional activator. This Candida albicans (strain SC5314 / ATCC MYA-2876) (Yeast) protein is Probable sucrose utilization protein SUC1 (SUC1).